The primary structure comprises 539 residues: Zinc finger and BTB domain-containing protein 7B (539 aa).

One can recognise a BTB domain in the interval 34–115 (CDLTIRTQGL…AYTATLTTSS (82 aa)). Serine 150 is subject to Phosphoserine. The tract at residues 171–308 (ASGVPNGEDS…SPEELGSDED (138 aa)) is disordered. A compositionally biased stretch (pro residues) spans 182–196 (PQVPLPPPPPPPPRP). Positions 197–206 (VARRSRKPRK) are enriched in basic residues. An N6-acetyllysine; by EP300; alternate mark is found at lysine 206 and lysine 212. Residues lysine 206 and lysine 212 each participate in a glycyl lysine isopeptide (Lys-Gly) (interchain with G-Cter in ubiquitin); alternate cross-link. A compositionally biased stretch (acidic residues) spans 273–282 (YEGEEEEEEL). Lysine 335 is subject to N6-acetyllysine; by EP300; alternate. Residue lysine 335 forms a Glycyl lysine isopeptide (Lys-Gly) (interchain with G-Cter in ubiquitin); alternate linkage. Residues 344-400 (MPQECPVCHKIIHGAGKLPRHMRTHTGEKPFACEVCGVRFTRNDKLKIHMRKHTGER) form a required for interaction with and acetylation by EP300 region. A C2H2-type 1 zinc finger spans residues 346 to 368 (QECPVCHKIIHGAGKLPRHMRTH). Residue threonine 369 is modified to Phosphothreonine. 2 C2H2-type zinc fingers span residues 374–396 (FACEVCGVRFTRNDKLKIHMRKH) and 402–424 (YSCPHCPARFLHSYDLKNHMHLH). The C2H2-type 4; atypical zinc-finger motif lies at 430–454 (YECHLCHKAFAKEDHLQRHLKGQNC). Disordered regions lie at residues 458–486 (RTRRRRKDDAPPHYPPPSTAAASPAGLDL) and 501–539 (FWEQSAPTGPPVSTPGPPDDDEEEGAPTTPQAEGAMESS). The segment covering 508–517 (TGPPVSTPGP) has biased composition (pro residues).

Homodimerizes. Interacts with NCL, NEDD4 and YBX1. Interacts with HNRNPU (via RNA-binding RGG-box region); the interaction facilitates the recruitment of long non-coding RNA Blnc1 by ZBTB7B. Interacts with HDAC4 and HDAC5; the interaction allows the recruitment of HDAC4 and HDAC5 on CD8 loci for deacetylation and possible inhibition of CD8 genes expression. Acetylated directly and specifically by EP300. EP300-mediated acetylation of Lys-206, Lys-212 and Lys-335 stabilizes the protein by antagonizing ubiquitin conjugation. In terms of processing, ubiquitinated, leading to proteasomal degradation. Competes with acetylation on Lys-206, Lys-212 and Lys-335.

Its subcellular location is the nucleus. In terms of biological role, transcription regulator that acts as a key regulator of lineage commitment of immature T-cell precursors. Exerts distinct biological functions in the mammary epithelial cells and T cells in a tissue-specific manner. Necessary and sufficient for commitment of CD4 lineage, while its absence causes CD8 commitment. Development of immature T-cell precursors (thymocytes) to either the CD4 helper or CD8 killer T-cell lineages correlates precisely with their T-cell receptor specificity for major histocompatibility complex class II or class I molecules, respectively. Cross-antagonism between ZBTB7B and CBF complexes are determinative to CD4 versus CD8 cell fate decision. Suppresses RUNX3 expression and imposes CD4+ lineage fate by inducing the SOCS suppressors of cytokine signaling. induces, as a transcriptional activator, SOCS genes expression which represses RUNX3 expression and promotes the CD4+ lineage fate. During CD4 lineage commitment, associates with multiple sites at the CD8 locus, acting as a negative regulator of the CD8 promoter and enhancers by epigenetic silencing through the recruitment of class II histone deacetylases, such as HDAC4 and HDAC5, to these loci. Regulates the development of IL17-producing CD1d-restricted naural killer (NK) T cells. Also functions as an important metabolic regulator in the lactating mammary glands. Critical feed-forward regulator of insulin signaling in mammary gland lactation, directly regulates expression of insulin receptor substrate-1 (IRS-1) and insulin-induced Akt-mTOR-SREBP signaling. Transcriptional repressor of the collagen COL1A1 and COL1A2 genes. May also function as a repressor of fibronectin and possibly other extracellular matrix genes. Potent driver of brown fat development, thermogenesis and cold-induced beige fat formation. Recruits the brown fat lncRNA 1 (Blnc1):HNRNPU ribonucleoprotein complex to activate thermogenic gene expression in brown and beige adipocytes. The sequence is that of Zinc finger and BTB domain-containing protein 7B from Homo sapiens (Human).